Here is a 204-residue protein sequence, read N- to C-terminus: Dual specificity protein phosphatase 18 (204 aa).

Positions 19-160 (GLSQITKSLF…LIHYEFQLFG (142 aa)) constitute a Tyrosine-protein phosphatase domain. Residues 95 to 141 (MKQGRTLLHCAAGVSRSAALCLAYLMKYHVMSLLDAHAWTKSRRPII) form a sufficient for mitochondrial localization region. Cys104 (phosphocysteine intermediate) is an active-site residue.

The protein belongs to the protein-tyrosine phosphatase family. Non-receptor class dual specificity subfamily.

Its subcellular location is the cytoplasm. The protein resides in the nucleus. The protein localises to the mitochondrion inner membrane. It carries out the reaction O-phospho-L-tyrosyl-[protein] + H2O = L-tyrosyl-[protein] + phosphate. The enzyme catalyses O-phospho-L-seryl-[protein] + H2O = L-seryl-[protein] + phosphate. It catalyses the reaction O-phospho-L-threonyl-[protein] + H2O = L-threonyl-[protein] + phosphate. Its function is as follows. Can dephosphorylate single and diphosphorylated synthetic MAPK peptides, with preference for the phosphotyrosine and diphosphorylated forms over phosphothreonine. In vitro, dephosphorylates p-nitrophenyl phosphate (pNPP). The sequence is that of Dual specificity protein phosphatase 18 (Dusp18) from Rattus norvegicus (Rat).